Consider the following 344-residue polypeptide: Hypoxia-inducible factor 1-alpha inhibitor (344 aa).

Residue Ala-2 is modified to N-acetylalanine. The region spanning 133-303 is the JmjC domain; that stretch reads GRVYLQQTLN…PKRIEYPLKA (171 aa). Tyr-136 is a binding site for 2-oxoglutarate. Substrate-binding positions include Asp-143 and 173-174; that span reads LT. Residue Thr-187 coordinates 2-oxoglutarate. Fe cation-binding residues include His-190 and Asp-192. 192 to 194 lines the substrate pocket; the sequence is DEQ. The 2-oxoglutarate site is built by Asn-196 and Lys-205. 229-230 is a substrate binding site; that stretch reads RQ. A Fe cation-binding site is contributed by His-270. Asn-285 provides a ligand contact to 2-oxoglutarate. Substrate contacts are provided by Ala-291 and Asn-312.

Homodimer; homodimerization is essential for catalytic activity. Fe(2+) is required as a cofactor.

It localises to the nucleus. The protein localises to the cytoplasm. Its subcellular location is the perinuclear region. It carries out the reaction L-asparaginyl-[hypoxia-inducible factor alpha subunit] + 2-oxoglutarate + O2 = (3S)-3-hydroxy-L-asparaginyl-[hypoxia-inducible factor alpha subunit] + succinate + CO2. The catalysed reaction is L-histidyl-[ankyrin-repeat domain protein] + 2-oxoglutarate + O2 = (3S)-3-hydroxy-L-histidyl-[ankyrin-repeat domain protein] + succinate + CO2. It catalyses the reaction L-asparaginyl-[ankyrin-repeat domain protein] + 2-oxoglutarate + O2 = (3S)-3-hydroxy-L-asparaginyl-[ankyrin-repeat domain protein] + succinate + CO2. The enzyme catalyses L-aspartyl-[ankyrin-repeat domain protein] + 2-oxoglutarate + O2 = (3S)-3-hydroxy-L-aspartyl-[ankyrin-repeat domain protein] + succinate + CO2. Its function is as follows. Hydroxylates a specific Asn residue in the C-terminal transactivation domain (CAD) of HIF-1 alpha. The hydroxylation prevents interaction of HIF-1 with transcriptional coactivators. Also hydroxylates specific Asn, Asp and His residues within ankyrin repeat domain-containing proteins. This chain is Hypoxia-inducible factor 1-alpha inhibitor (hif1an), found in Danio rerio (Zebrafish).